Here is a 227-residue protein sequence, read N- to C-terminus: Ribonuclease S-5 (227 aa).

The first 27 residues, Met-1–Gly-27, serve as a signal peptide directing secretion. Gln-36 lines the RNA pocket. A disulfide bond links Cys-42 and Cys-49. A glycan (N-linked (GlcNAc...) asparagine) is linked at Asn-45. RNA-binding positions include His-60, Asn-97–Val-98, Phe-107, Lys-110–Glu-111, and Lys-114–His-115. His-60 (proton donor) is an active-site residue. A disulfide bridge links Cys-75 with Cys-118. Glu-111 is an active-site residue. Residue His-115 is the Proton acceptor of the active site. N-linked (GlcNAc...) asparagine glycosylation occurs at Asn-143. Intrachain disulfides connect Cys-182-Cys-220 and Cys-197-Cys-208.

It belongs to the RNase T2 family. N-glycan at Asn-45 consists of disaccharide (GlcNAc-GlcNAc). N-linked core structure at Asn-143 contains xylose.

It carries out the reaction a ribonucleotidyl-ribonucleotide-RNA + H2O = a 3'-end 3'-phospho-ribonucleotide-RNA + a 5'-end dephospho-ribonucleoside-RNA + H(+). Self-incompatibility (SI) is the inherited ability of a flowering plant to prevent self-fertilization by discriminating between self and non-self pollen during pollination. In many species, self-incompatibility is controlled by the single, multiallelic locus S. In Pyrus pyrifolia (Chinese pear), this protein is Ribonuclease S-5.